We begin with the raw amino-acid sequence, 239 residues long: Large ribosomal subunit protein uL2 (239 aa).

The tract at residues 200–239 (VNHPHGGKEHHIGRPSTVSRRAPPGRKVGHIAARRTGRRK) is disordered. Residues 222-239 (PPGRKVGHIAARRTGRRK) are compositionally biased toward basic residues.

Belongs to the universal ribosomal protein uL2 family. As to quaternary structure, part of the 50S ribosomal subunit. Forms a bridge to the 30S subunit in the 70S ribosome.

In terms of biological role, one of the primary rRNA binding proteins. Required for association of the 30S and 50S subunits to form the 70S ribosome, for tRNA binding and peptide bond formation. It has been suggested to have peptidyltransferase activity; this is somewhat controversial. Makes several contacts with the 16S rRNA in the 70S ribosome. In Thermococcus onnurineus (strain NA1), this protein is Large ribosomal subunit protein uL2.